The primary structure comprises 634 residues: Chaperone protein HtpG (634 aa).

Positions M1 to R342 are a; substrate-binding. The tract at residues E343–Q559 is b. A c region spans residues L560 to A634.

The protein belongs to the heat shock protein 90 family. As to quaternary structure, homodimer.

Its subcellular location is the cytoplasm. In terms of biological role, molecular chaperone. Has ATPase activity. This chain is Chaperone protein HtpG, found in Xanthomonas campestris pv. campestris (strain 8004).